Reading from the N-terminus, the 196-residue chain is Ribonuclease S-F11 (196 aa).

Cysteines 16 and 21 form a disulfide. N-linked (GlcNAc...) asparagine glycosylation is present at N28. H32 serves as the catalytic Proton donor. Residues H32 and 69–70 (QL) each bind RNA. Cystine bridges form between C46–C94, C153–C186, and C169–C180. Q87 is an active-site residue. RNA is bound at residue 90-91 (KH). H91 (proton acceptor) is an active-site residue.

It belongs to the RNase T2 family. In terms of assembly, monomer.

The protein resides in the secreted. It is found in the extracellular space. The enzyme catalyses a ribonucleotidyl-ribonucleotide-RNA + H2O = a 3'-end 3'-phospho-ribonucleotide-RNA + a 5'-end dephospho-ribonucleoside-RNA + H(+). In terms of biological role, self-incompatibility (SI) is the inherited ability of a flowering plant to prevent self-fertilization by discriminating between self and non-self pollen during pollination. In many species of the Solanaceae, self-incompatibility is controlled by the single, multiallelic locus S. The protein is Ribonuclease S-F11 of Nicotiana alata (Winged tobacco).